A 743-amino-acid chain; its full sequence is Acetyl-coenzyme A synthetase, chloroplastic/glyoxysomal (743 aa).

The transit peptide at 1-84 (MKIGSPSSPI…LNAVVLGESL (84 aa)) directs the protein to the chloroplast. Residue aspartate 613 is part of the active site.

The protein belongs to the ATP-dependent AMP-binding enzyme family. In terms of tissue distribution, expressed in leaves, flower buds and young flowers.

The protein resides in the plastid. It is found in the chloroplast. Its subcellular location is the glyoxysome. The enzyme catalyses acetate + ATP + CoA = acetyl-CoA + AMP + diphosphate. Functionally, catalyzes the production of acetyl-CoA, an activated form of acetate that can be used for lipid synthesis or for energy generation. May play a limited role in the biosynthesis of lipids. The polypeptide is Acetyl-coenzyme A synthetase, chloroplastic/glyoxysomal (ACS) (Arabidopsis thaliana (Mouse-ear cress)).